Here is a 206-residue protein sequence, read N- to C-terminus: Small ribosomal subunit protein uS4c (206 aa).

An S4 RNA-binding domain is found at 94-152 (MRLDNIVFRLGMAPTIPAARQLVNHRHILVNDFTVNIPSYSCKLGDKISVQKRFESKTN).

This sequence belongs to the universal ribosomal protein uS4 family. In terms of assembly, part of the 30S ribosomal subunit. Contacts protein S5. The interaction surface between S4 and S5 is involved in control of translational fidelity.

Its subcellular location is the plastid. It is found in the chloroplast. One of the primary rRNA binding proteins, it binds directly to 16S rRNA where it nucleates assembly of the body of the 30S subunit. Functionally, with S5 and S12 plays an important role in translational accuracy. This Chara vulgaris (Common stonewort) protein is Small ribosomal subunit protein uS4c (rps4).